The sequence spans 115 residues: T cell receptor beta variable 7-8 (115 aa).

Residues 1–21 (MGTRLLCWVVLGFLGTDHTGA) form the signal peptide. Positions 22-115 (GVSQSPRYKV…SAVYLCASSL (94 aa)) constitute an Ig-like domain. Cys42 and Cys111 are disulfide-bonded.

As to quaternary structure, alpha-beta TR is a heterodimer composed of an alpha and beta chain; disulfide-linked. The alpha-beta TR is associated with the transmembrane signaling CD3 coreceptor proteins to form the TR-CD3 (TcR or TCR). The assembly of alpha-beta TR heterodimers with CD3 occurs in the endoplasmic reticulum where a single alpha-beta TR heterodimer associates with one CD3D-CD3E heterodimer, one CD3G-CD3E heterodimer and one CD247 homodimer forming a stable octameric structure. CD3D-CD3E and CD3G-CD3E heterodimers preferentially associate with TR alpha and TR beta chains, respectively. The association of the CD247 homodimer is the last step of TcR assembly in the endoplasmic reticulum and is required for transport to the cell surface.

It localises to the cell membrane. Functionally, v region of the variable domain of T cell receptor (TR) beta chain that participates in the antigen recognition. Alpha-beta T cell receptors are antigen specific receptors which are essential to the immune response and are present on the cell surface of T lymphocytes. Recognize peptide-major histocompatibility (MH) (pMH) complexes that are displayed by antigen presenting cells (APC), a prerequisite for efficient T cell adaptive immunity against pathogens. Binding of alpha-beta TR to pMH complex initiates TR-CD3 clustering on the cell surface and intracellular activation of LCK that phosphorylates the ITAM motifs of CD3G, CD3D, CD3E and CD247 enabling the recruitment of ZAP70. In turn ZAP70 phosphorylates LAT, which recruits numerous signaling molecules to form the LAT signalosome. The LAT signalosome propagates signal branching to three major signaling pathways, the calcium, the mitogen-activated protein kinase (MAPK) kinase and the nuclear factor NF-kappa-B (NF-kB) pathways, leading to the mobilization of transcription factors that are critical for gene expression and essential for T cell growth and differentiation. The T cell repertoire is generated in the thymus, by V-(D)-J rearrangement. This repertoire is then shaped by intrathymic selection events to generate a peripheral T cell pool of self-MH restricted, non-autoaggressive T cells. Post-thymic interaction of alpha-beta TR with the pMH complexes shapes TR structural and functional avidity. In Homo sapiens (Human), this protein is T cell receptor beta variable 7-8.